Here is a 583-residue protein sequence, read N- to C-terminus: Complement factor I (583 aa).

The N-terminal stretch at 1 to 18 (MKLLHVFLLFLCFHLSFC) is a signal peptide. 16 cysteine pairs are disulfide-bonded: Cys-33/Cys-255, Cys-43/Cys-54, Cys-48/Cys-59, Cys-61/Cys-93, Cys-67/Cys-86, Cys-75/Cys-106, Cys-141/Cys-181, Cys-154/Cys-214, Cys-186/Cys-196, Cys-229/Cys-247, Cys-259/Cys-271, Cys-266/Cys-284, Cys-278/Cys-293, Cys-327/Cys-453, Cys-365/Cys-381, and Cys-373/Cys-444. Positions 55–108 (IEGTCICKLPYQCPKNGTTVCATNGRSFPTYCQQKSLECLRPGTKFLNNGTCTA) constitute a Kazal-like domain. 4 N-linked (GlcNAc...) asparagine glycosylation sites follow: Asn-70, Asn-103, Asn-173, and Asn-177. The SRCR domain occupies 114-212 (VSLKHGNTDS…TMGYQDLADV (99 aa)). LDL-receptor class A domains follow at residues 213–257 (VCYT…LCCK) and 258–294 (ACQG…VGCE). Ca(2+)-binding residues include Lys-239, Asp-242, Ile-244, Asp-246, Asp-252, and Glu-253. Ca(2+) is bound by residues Tyr-276, Asn-279, Glu-281, Asp-283, Asp-289, and Glu-290. In terms of domain architecture, Peptidase S1 spans 340 to 574 (IVGGKRAQLG…YFDWISYHVG (235 aa)). Catalysis depends on charge relay system residues His-380 and Asp-429. N-linked (GlcNAc...) asparagine glycosylation is found at Asn-464 and Asn-494. 3 disulfides stabilise this stretch: Cys-467/Cys-531, Cys-495/Cys-510, and Cys-521/Cys-550. The active-site Charge relay system is Ser-525. Residue Asn-536 is glycosylated (N-linked (GlcNAc...) asparagine).

Belongs to the peptidase S1 family. Heterodimer of a light and heavy chains; disulfide-linked. The fully processed and mature protein circulates as a zymogen, and is allosterically activated by substrate-induced remodeling of the active site. In terms of tissue distribution, plasma.

The protein resides in the secreted. The protein localises to the extracellular space. The catalysed reaction is Inactivates complement subcomponents C3b, iC3b and C4b by proteolytic cleavage.. Functionally, responsible for cleaving the alpha-chains of C4b and C3b in the presence of the cofactors C4-binding protein and factor H respectively. The protein is Complement factor I (CFI) of Pongo abelii (Sumatran orangutan).